Reading from the N-terminus, the 359-residue chain is Protein RecA (359 aa).

Residue 64–71 (GHESSGKT) participates in ATP binding. Residues 328–359 (NKYPNKDSNDSPKEGSKIKTKVNPAVTQDELI) are disordered. Positions 331–344 (PNKDSNDSPKEGSK) are enriched in basic and acidic residues.

This sequence belongs to the RecA family.

Its subcellular location is the cytoplasm. Functionally, can catalyze the hydrolysis of ATP in the presence of single-stranded DNA, the ATP-dependent uptake of single-stranded DNA by duplex DNA, and the ATP-dependent hybridization of homologous single-stranded DNAs. It interacts with LexA causing its activation and leading to its autocatalytic cleavage. This chain is Protein RecA, found in Francisella tularensis subsp. novicida (strain U112).